Reading from the N-terminus, the 325-residue chain is Hydroxymethylglutaryl-CoA lyase, mitochondrial (325 aa).

The transit peptide at 1-27 (MASVRKAFPRRLVGLTSLRAVSTSSMG) directs the protein to the mitochondrion. Residues 33 to 300 (VKIVEVGPRD…HTGVNLQKLL (268 aa)) enclose the Pyruvate carboxyltransferase domain. R41 is a substrate binding site. Position 42 (D42) interacts with a divalent metal cation. Residue K48 is modified to N6-acetyllysine; alternate. K48 carries the post-translational modification N6-succinyllysine; alternate. An N6-acetyllysine modification is found at K111. Residues K137 and K179 each carry the N6-acetyllysine; alternate modification. N6-succinyllysine; alternate is present on residues K137 and K179. Residues H233 and H235 each contribute to the a divalent metal cation site. C266 is a catalytic residue. Residue N275 participates in a divalent metal cation binding. The Microbody targeting signal signature appears at 323 to 325 (CKL). K324 bears the N6-acetyllysine mark.

Belongs to the HMG-CoA lyase family. Homodimer; disulfide-linked. Can also form homotetramers.

It localises to the mitochondrion matrix. The protein resides in the peroxisome. The enzyme catalyses (3S)-3-hydroxy-3-methylglutaryl-CoA = acetoacetate + acetyl-CoA. The protein operates within metabolic intermediate metabolism; (S)-3-hydroxy-3-methylglutaryl-CoA degradation; acetoacetate from (S)-3-hydroxy-3-methylglutaryl-CoA: step 1/1. Its function is as follows. Mitochondrial 3-hydroxy-3-methylglutaryl-CoA lyase that catalyzes a cation-dependent cleavage of (S)-3-hydroxy-3-methylglutaryl-CoA into acetyl-CoA and acetoacetate, a key step in ketogenesis. Terminal step in leucine catabolism. Ketone bodies (beta-hydroxybutyrate, acetoacetate and acetone) are essential as an alternative source of energy to glucose, as lipid precursors and as regulators of metabolism. The chain is Hydroxymethylglutaryl-CoA lyase, mitochondrial (Hmgcl) from Mus musculus (Mouse).